The primary structure comprises 942 residues: Valine--tRNA ligase (942 aa).

The 'HIGH' region motif lies at 43-53 (PNVTGTLHMGH). Positions 551-555 (KMSKS) match the 'KMSKS' region motif. Lysine 554 contacts ATP. A coiled-coil region spans residues 876–942 (EGLVDLDAER…AGLREQRAKL (67 aa)).

It belongs to the class-I aminoacyl-tRNA synthetase family. ValS type 1 subfamily. As to quaternary structure, monomer.

It is found in the cytoplasm. It catalyses the reaction tRNA(Val) + L-valine + ATP = L-valyl-tRNA(Val) + AMP + diphosphate. In terms of biological role, catalyzes the attachment of valine to tRNA(Val). As ValRS can inadvertently accommodate and process structurally similar amino acids such as threonine, to avoid such errors, it has a 'posttransfer' editing activity that hydrolyzes mischarged Thr-tRNA(Val) in a tRNA-dependent manner. The sequence is that of Valine--tRNA ligase from Stenotrophomonas maltophilia (strain R551-3).